A 427-amino-acid polypeptide reads, in one-letter code: 3-phosphoshikimate 1-carboxyvinyltransferase (427 aa).

Lys22, Ser23, and Arg27 together coordinate 3-phosphoshikimate. A phosphoenolpyruvate-binding site is contributed by Lys22. Residues Gly96 and Arg124 each contribute to the phosphoenolpyruvate site. 7 residues coordinate 3-phosphoshikimate: Ser169, Ser170, Gln171, Ser197, Asp313, Asn336, and Lys340. Gln171 contributes to the phosphoenolpyruvate binding site. Catalysis depends on Asp313, which acts as the Proton acceptor. Positions 344, 386, and 411 each coordinate phosphoenolpyruvate.

This sequence belongs to the EPSP synthase family. In terms of assembly, monomer.

Its subcellular location is the cytoplasm. It catalyses the reaction 3-phosphoshikimate + phosphoenolpyruvate = 5-O-(1-carboxyvinyl)-3-phosphoshikimate + phosphate. The protein operates within metabolic intermediate biosynthesis; chorismate biosynthesis; chorismate from D-erythrose 4-phosphate and phosphoenolpyruvate: step 6/7. Functionally, catalyzes the transfer of the enolpyruvyl moiety of phosphoenolpyruvate (PEP) to the 5-hydroxyl of shikimate-3-phosphate (S3P) to produce enolpyruvyl shikimate-3-phosphate and inorganic phosphate. The polypeptide is 3-phosphoshikimate 1-carboxyvinyltransferase (Salmonella schwarzengrund (strain CVM19633)).